A 1770-amino-acid chain; its full sequence is U3 small nucleolar RNA-associated protein 10 (1770 aa).

A run of 2 helical transmembrane segments spans residues 499–519 and 528–548; these read ILGL…FLSS and LTFL…RLLA. Residues 1730–1768 form an HEAT repeat; the sequence is MVPIIAELLEDDNEEVESEVRGGLVRVMENVLGEPFDRY.

The protein belongs to the HEATR1/UTP10 family. As to quaternary structure, component of the ribosomal small subunit (SSU) processome.

Its subcellular location is the nucleus. The protein localises to the nucleolus. It localises to the membrane. Involved in nucleolar processing of pre-18S ribosomal RNA. Involved in ribosome biosynthesis. This Candida glabrata (strain ATCC 2001 / BCRC 20586 / JCM 3761 / NBRC 0622 / NRRL Y-65 / CBS 138) (Yeast) protein is U3 small nucleolar RNA-associated protein 10.